Consider the following 570-residue polypeptide: Sulfite reductase [NADPH] hemoprotein beta-component (570 aa).

[4Fe-4S] cluster-binding residues include C434, C440, C479, and C483. Residue C483 participates in siroheme binding.

The protein belongs to the nitrite and sulfite reductase 4Fe-4S domain family. Alpha(8)-beta(8). The alpha component is a flavoprotein, the beta component is a hemoprotein. Siroheme serves as cofactor. [4Fe-4S] cluster is required as a cofactor.

The enzyme catalyses hydrogen sulfide + 3 NADP(+) + 3 H2O = sulfite + 3 NADPH + 4 H(+). The protein operates within sulfur metabolism; hydrogen sulfide biosynthesis; hydrogen sulfide from sulfite (NADPH route): step 1/1. Functionally, component of the sulfite reductase complex that catalyzes the 6-electron reduction of sulfite to sulfide. This is one of several activities required for the biosynthesis of L-cysteine from sulfate. In Cronobacter sakazakii (strain ATCC BAA-894) (Enterobacter sakazakii), this protein is Sulfite reductase [NADPH] hemoprotein beta-component.